The chain runs to 311 residues: Pyrimidine-specific ribonucleoside hydrolase RihA (311 aa).

H240 is a catalytic residue.

Belongs to the IUNH family. RihA subfamily.

Hydrolyzes with equal efficiency cytidine or uridine to ribose and cytosine or uracil, respectively. The sequence is that of Pyrimidine-specific ribonucleoside hydrolase RihA from Escherichia coli O127:H6 (strain E2348/69 / EPEC).